We begin with the raw amino-acid sequence, 31 residues long: Cytochrome b6-f complex subunit 6 (31 aa).

A helical transmembrane segment spans residues 3–23; sequence VFLGYIIFLAAFFGLATGLFL.

This sequence belongs to the PetL family. As to quaternary structure, the 4 large subunits of the cytochrome b6-f complex are cytochrome b6, subunit IV (17 kDa polypeptide, PetD), cytochrome f and the Rieske protein, while the 4 small subunits are PetG, PetL, PetM and PetN. The complex functions as a dimer.

It localises to the plastid. The protein localises to the chloroplast thylakoid membrane. Component of the cytochrome b6-f complex, which mediates electron transfer between photosystem II (PSII) and photosystem I (PSI), cyclic electron flow around PSI, and state transitions. PetL is important for photoautotrophic growth as well as for electron transfer efficiency and stability of the cytochrome b6-f complex. In Pyropia yezoensis (Susabi-nori), this protein is Cytochrome b6-f complex subunit 6.